The following is a 239-amino-acid chain: MTRDQAREKVIFALDTGEFAHVQYWAETLSDKVGMYKIGKQLFTACGPAAVRMIQKFGGEVFLDLKFHDIPNTVAMASVEAARMGVKLFNLHALGGYEMMAKTVEALDKEFKGGDRAKVLAVTILTSSTEETLKDLGIEHTVPDMVVRLATLARKAGIDGVVASPREIPLIREACGSDFLIVTPGVRPSFAALNDQKRVMTPAEAVKAGSDYLVIGRPIGDAPDPAAAAELILGEIVAG.

Residues D15, K37, 64 to 73 (DLKFHDIPNT), T126, R187, Q196, G216, and R217 each bind substrate. The active-site Proton donor is K66.

The protein belongs to the OMP decarboxylase family. Type 1 subfamily. As to quaternary structure, homodimer.

It catalyses the reaction orotidine 5'-phosphate + H(+) = UMP + CO2. Its pathway is pyrimidine metabolism; UMP biosynthesis via de novo pathway; UMP from orotate: step 2/2. In terms of biological role, catalyzes the decarboxylation of orotidine 5'-monophosphate (OMP) to uridine 5'-monophosphate (UMP). This Geobacter metallireducens (strain ATCC 53774 / DSM 7210 / GS-15) protein is Orotidine 5'-phosphate decarboxylase.